Reading from the N-terminus, the 736-residue chain is Elongation factor 2 (736 aa).

The 217-residue stretch at 18–234 folds into the tr-type G domain; it reads TRVRNIGIIA…VIDAYTASDK (217 aa). GTP is bound by residues 27–34, 93–97, and 147–150; these read AHVDHGKT, DTPGH, and NKVD. Position 603 is a diphthamide (histidine 603).

It belongs to the TRAFAC class translation factor GTPase superfamily. Classic translation factor GTPase family. EF-G/EF-2 subfamily.

The protein localises to the cytoplasm. Its function is as follows. Catalyzes the GTP-dependent ribosomal translocation step during translation elongation. During this step, the ribosome changes from the pre-translocational (PRE) to the post-translocational (POST) state as the newly formed A-site-bound peptidyl-tRNA and P-site-bound deacylated tRNA move to the P and E sites, respectively. Catalyzes the coordinated movement of the two tRNA molecules, the mRNA and conformational changes in the ribosome. In Saccharolobus solfataricus (strain ATCC 35092 / DSM 1617 / JCM 11322 / P2) (Sulfolobus solfataricus), this protein is Elongation factor 2 (fusA).